Consider the following 312-residue polypeptide: Aspartoacylase (312 aa).

Zn(2+) is bound by residues H20 and E23. Residues R62, N69, and R70 each coordinate N-acetyl-L-aspartate. H115 contributes to the Zn(2+) binding site. N-acetyl-L-aspartate contacts are provided by Y163 and R167. The active-site Proton donor/acceptor is the E177. N-acetyl-L-aspartate is bound at residue Y287.

The protein belongs to the AspA/AstE family. Aspartoacylase subfamily. As to quaternary structure, homodimer. Zn(2+) serves as cofactor. As to expression, detected in kidney proximal tubule cells (at protein level).

The protein localises to the cytoplasm. The protein resides in the nucleus. The catalysed reaction is an N-acyl-L-aspartate + H2O = a carboxylate + L-aspartate. It carries out the reaction N-acetyl-L-aspartate + H2O = L-aspartate + acetate. Functionally, catalyzes the deacetylation of N-acetylaspartic acid (NAA) to produce acetate and L-aspartate. NAA occurs in high concentration in brain and its hydrolysis NAA plays a significant part in the maintenance of intact white matter. In other tissues it acts as a scavenger of NAA from body fluids. This Rattus norvegicus (Rat) protein is Aspartoacylase.